The primary structure comprises 465 residues: Argininosuccinate lyase (465 aa).

Belongs to the lyase 1 family. Argininosuccinate lyase subfamily.

Its subcellular location is the cytoplasm. It carries out the reaction 2-(N(omega)-L-arginino)succinate = fumarate + L-arginine. The protein operates within amino-acid biosynthesis; L-arginine biosynthesis; L-arginine from L-ornithine and carbamoyl phosphate: step 3/3. This is Argininosuccinate lyase from Nitrobacter winogradskyi (strain ATCC 25391 / DSM 10237 / CIP 104748 / NCIMB 11846 / Nb-255).